A 288-amino-acid polypeptide reads, in one-letter code: Tryptophan 2,3-dioxygenase (288 aa).

Substrate-binding positions include 57 to 61 (FIIQH), tyrosine 119, and arginine 123. Histidine 246 contacts heme. A substrate-binding site is contributed by threonine 260.

Belongs to the tryptophan 2,3-dioxygenase family. In terms of assembly, homotetramer. Heme is required as a cofactor.

The catalysed reaction is L-tryptophan + O2 = N-formyl-L-kynurenine. Its pathway is amino-acid degradation; L-tryptophan degradation via kynurenine pathway; L-kynurenine from L-tryptophan: step 1/2. Its function is as follows. Heme-dependent dioxygenase that catalyzes the oxidative cleavage of the L-tryptophan (L-Trp) pyrrole ring and converts L-tryptophan to N-formyl-L-kynurenine. Catalyzes the oxidative cleavage of the indole moiety. The sequence is that of Tryptophan 2,3-dioxygenase from Pseudomonas aeruginosa (strain UCBPP-PA14).